The following is a 106-amino-acid chain: ATP-dependent Clp protease adapter protein ClpS (106 aa).

The span at 1 to 10 (MSQKTVHDQD) shows a compositional bias: basic and acidic residues. The tract at residues 1 to 23 (MSQKTVHDQDNALLLETGNTKVA) is disordered.

This sequence belongs to the ClpS family. In terms of assembly, binds to the N-terminal domain of the chaperone ClpA.

In terms of biological role, involved in the modulation of the specificity of the ClpAP-mediated ATP-dependent protein degradation. This Xylella fastidiosa (strain M23) protein is ATP-dependent Clp protease adapter protein ClpS.